Reading from the N-terminus, the 225-residue chain is Octanoyltransferase (225 aa).

The 184-residue stretch at 31–214 (ENTCDEVWLV…ELTTLLDYTD (184 aa)) folds into the BPL/LPL catalytic domain. Substrate-binding positions include 70 to 77 (RGGQVTYH), 137 to 139 (SLG), and 150 to 152 (GLA). The active-site Acyl-thioester intermediate is the Cys-168.

It belongs to the LipB family.

It is found in the cytoplasm. It catalyses the reaction octanoyl-[ACP] + L-lysyl-[protein] = N(6)-octanoyl-L-lysyl-[protein] + holo-[ACP] + H(+). It functions in the pathway protein modification; protein lipoylation via endogenous pathway; protein N(6)-(lipoyl)lysine from octanoyl-[acyl-carrier-protein]: step 1/2. Catalyzes the transfer of endogenously produced octanoic acid from octanoyl-acyl-carrier-protein onto the lipoyl domains of lipoate-dependent enzymes. Lipoyl-ACP can also act as a substrate although octanoyl-ACP is likely to be the physiological substrate. This Aliivibrio fischeri (strain ATCC 700601 / ES114) (Vibrio fischeri) protein is Octanoyltransferase.